Consider the following 437-residue polypeptide: UDP-N-acetylmuramoylalanine--D-glutamate ligase (437 aa).

112–118 (GSNGKST) is a binding site for ATP.

Belongs to the MurCDEF family.

Its subcellular location is the cytoplasm. It catalyses the reaction UDP-N-acetyl-alpha-D-muramoyl-L-alanine + D-glutamate + ATP = UDP-N-acetyl-alpha-D-muramoyl-L-alanyl-D-glutamate + ADP + phosphate + H(+). The protein operates within cell wall biogenesis; peptidoglycan biosynthesis. Cell wall formation. Catalyzes the addition of glutamate to the nucleotide precursor UDP-N-acetylmuramoyl-L-alanine (UMA). In Haemophilus influenzae (strain ATCC 51907 / DSM 11121 / KW20 / Rd), this protein is UDP-N-acetylmuramoylalanine--D-glutamate ligase (murD).